A 121-amino-acid chain; its full sequence is Basic phospholipase A2 homolog BaTX (121 aa).

7 disulfides stabilise this stretch: cysteine 26–cysteine 115, cysteine 28–cysteine 44, cysteine 43–cysteine 95, cysteine 49–cysteine 121, cysteine 50–cysteine 88, cysteine 57–cysteine 81, and cysteine 75–cysteine 86. The important for membrane-damaging activities in eukaryotes and bacteria; heparin-binding stretch occupies residues 105-117 (KKYRYYLKPLCKK).

Belongs to the phospholipase A2 family. Group II subfamily. K49 sub-subfamily. As to quaternary structure, homodimer; non-covalently linked. As to expression, expressed by the venom gland.

It localises to the secreted. Functionally, snake venom phospholipase A2 homolog that lacks enzymatic activity. Is myotoxic and displays edema-inducing activities. In vitro, produced time-dependent, irreversible neuromuscular blockade in isolated mouse phrenic nerve-diaphragm and chick biventer cervicis preparations. A model of myotoxic mechanism has been proposed: an apo Lys49-PLA2 is activated by the entrance of a hydrophobic molecule (e.g. fatty acid) at the hydrophobic channel of the protein leading to a reorientation of a monomer. This reorientation causes a transition between 'inactive' to 'active' states, causing alignment of C-terminal and membrane-docking sites (MDoS) side-by-side and putting the membrane-disruption sites (MDiS) in the same plane, exposed to solvent and in a symmetric position for both monomers. The MDoS region stabilizes the toxin on membrane by the interaction of charged residues with phospholipid head groups. Subsequently, the MDiS region destabilizes the membrane with penetration of hydrophobic residues. This insertion causes a disorganization of the membrane, allowing an uncontrolled influx of ions (i.e. calcium and sodium), and eventually triggering irreversible intracellular alterations and cell death. This Bothrops alternatus (Urutu) protein is Basic phospholipase A2 homolog BaTX.